We begin with the raw amino-acid sequence, 107 residues long: Multidrug resistance protein mmr (107 aa).

The next 4 membrane-spanning stretches (helical) occupy residues 2-19, 29-51, 58-80, and 84-106; these read TYLFLICAILAEVVATSL, LWPTVICLLGYAVSFALLAVSIS, VAYALWSAIGTALIVLIAVLFLG, and SVTKVVGVGLIIAGVVTLNLTGA.

Belongs to the drug/metabolite transporter (DMT) superfamily. Small multidrug resistance (SMR) (TC 2.A.7.1) family. Mmr subfamily.

Its subcellular location is the cell membrane. Multidrug efflux pump. Confers resistance to tetraphenylphosphonium (TPP), erythromycin, ethidium bromide, acriflavine, safranin O and pyronin Y. This chain is Multidrug resistance protein mmr (mmr), found in Mycolicibacterium paratuberculosis (strain ATCC BAA-968 / K-10) (Mycobacterium paratuberculosis).